We begin with the raw amino-acid sequence, 659 residues long: Cyclic-di-AMP phosphodiesterase GdpP (659 aa).

Topologically, residues 1 to 8 are cytoplasmic; it reads MPSFYEKP. Helical transmembrane passes span 9 to 29 and 30 to 50; these read LFRY…LISF and YFNW…LFFI. The Cytoplasmic segment spans residues 51–659; the sequence is KRADSLIRQE…DEYFEGGVQR (609 aa). Residues 84-149 form a PAS-like domain, required for heme-binding region; that stretch reads PIGIMLFNDQ…NDRKFRVVIK (66 aa). The GGDEF domain maps to 173-301; sequence ERTVLAYIFL…GGDQVAIKLP (129 aa). Positions 339 to 496 are DHH domain; it reads NVIIMGHKFP…IEATALLAGI (158 aa). 6 residues coordinate Mn(2+): histidine 345, aspartate 349, aspartate 351, aspartate 420, histidine 444, and aspartate 499. The segment at 591 to 646 is DHHA1 domain; that stretch reads FAVARRDEQTVCISARSLGEVNVQIIMEALEGGGHLTNAATQLSGISVSEALERLK.

It belongs to the GdpP/PdeA phosphodiesterase family. Heme b serves as cofactor. Mg(2+) is required as a cofactor. It depends on Mn(2+) as a cofactor.

It localises to the cell membrane. It catalyses the reaction 3',3'-c-di-AMP + H2O = 5'-O-phosphonoadenylyl-(3'-&gt;5')-adenosine + H(+). With respect to regulation, phosphodiesterase (PDE) inhibited by Zn(2+), Ca(2+) inhibits in the presence of Mg(2+) but not Mn(2+); c-di-AMP PDE activity is competitively inhibited by ppGpp. Heme binding (by Fe(2+) or Fe(3+) heme) inhibits PDE, activity is partially restored by KCN or NO only for Fe(2+) heme. Binding of NO to Fe(2+) heme switches from hexa- to pentacoordination. Heme binding inhibits the ATPase activity. Its function is as follows. Has phosphodiesterase (PDE) activity against cyclic-di-AMP (c-di-AMP) and to a much lesser extent against cyclic-di-GMP (c-di-GMP) in the DHH/DHHA1 domains. Also has ATPase activity, probably via the GGDEF domain. Overexpression leads to increased sensitivity to methyl methanesulfonate (MMS) and H(2)O(2). Overexpression leads to extreme sensitivity to the beta-lactam antibiotic cefuroxime (CEF), probably dependent on PDE activity. May monitor cellular heme or NO levels. In B.subtilis c-di-AMP is a second messenger that mediates growth, DNA repair and cell wall homeostasis; it is toxic when present in excess. The chain is Cyclic-di-AMP phosphodiesterase GdpP from Bacillus subtilis (strain 168).